We begin with the raw amino-acid sequence, 304 residues long: Non-specific ribonucleoside hydrolase RihC (304 aa).

Histidine 233 is a catalytic residue.

Belongs to the IUNH family. RihC subfamily.

Its function is as follows. Hydrolyzes both purine and pyrimidine ribonucleosides with a broad-substrate specificity. The chain is Non-specific ribonucleoside hydrolase RihC from Shigella dysenteriae serotype 1 (strain Sd197).